Consider the following 91-residue polypeptide: Probable Fe(2+)-trafficking protein (91 aa).

The protein belongs to the Fe(2+)-trafficking protein family.

Its function is as follows. Could be a mediator in iron transactions between iron acquisition and iron-requiring processes, such as synthesis and/or repair of Fe-S clusters in biosynthetic enzymes. The chain is Probable Fe(2+)-trafficking protein from Burkholderia ambifaria (strain MC40-6).